We begin with the raw amino-acid sequence, 192 residues long: Ras-like GTP-binding protein O-RHO (192 aa).

12–19 contacts GTP; that stretch reads GDGACGKT. The Effector region signature appears at 34 to 42; sequence YVPTVFENY. GTP is bound by residues 59–63 and 117–120; these read DTAGQ and NKKT. Cysteine methyl ester is present on Cys189. The S-geranylgeranyl cysteine moiety is linked to residue Cys189. A propeptide spans 190-192 (removed in mature form); sequence LLL.

This sequence belongs to the small GTPase superfamily. Rho family.

Its subcellular location is the cell membrane. The protein is Ras-like GTP-binding protein O-RHO of Diplobatis ommata (Ocellated electric ray).